The sequence spans 1199 residues: Metabotropic glutamate receptor 1 (1199 aa).

An N-terminal signal peptide occupies residues 1–20 (MVRLLLIFFPMIFLEMSILP). The Extracellular portion of the chain corresponds to 21–592 (RMPDRKVLLA…IRYLEWSDIE (572 aa)). Cysteine 67 and cysteine 109 are oxidised to a cystine. Tyrosine 74 serves as a coordination point for L-glutamate. Asparagine 98 is a glycosylation site (N-linked (GlcNAc...) asparagine). L-glutamate-binding positions include serine 165 and 186–188 (SAT). An N-linked (GlcNAc...) asparagine glycan is attached at asparagine 223. Residue tyrosine 236 coordinates L-glutamate. The cysteines at positions 289 and 291 are disulfide-linked. An L-glutamate-binding site is contributed by aspartate 318. A disulfide bridge links cysteine 378 with cysteine 394. Asparagine 397 carries an N-linked (GlcNAc...) asparagine glycan. Lysine 409 is an L-glutamate binding site. An intrachain disulfide couples cysteine 432 to cysteine 439. N-linked (GlcNAc...) asparagine glycosylation occurs at asparagine 515. A helical transmembrane segment spans residues 593–615 (SIIAIAFSCLGILVTLFVTLIFV). Residues 616–629 (LYRDTPVVKSSSRE) lie on the Cytoplasmic side of the membrane. The helical transmembrane segment at 630-650 (LCYIILAGIFLGYVCPFTLIA) threads the bilayer. Topologically, residues 651 to 658 (KPTTTSCY) are extracellular. An intrachain disulfide couples cysteine 657 to cysteine 746. The chain crosses the membrane as a helical span at residues 659–680 (LQRLLVGLSSAMCYSALVTKTN). Over 681–703 (RIARILAGSKKKICTRKPRFMSA) the chain is Cytoplasmic. A helical transmembrane segment spans residues 704–727 (WAQVIIASILISVQLTLVVTLIIM). The Extracellular segment spans residues 728 to 750 (EPPMPILSYPSIKEVYLICNTSN). Residue asparagine 747 is glycosylated (N-linked (GlcNAc...) asparagine). The chain crosses the membrane as a helical span at residues 751–772 (LGVVAPVGYNGLLIMSCTYYAF). Topologically, residues 773–785 (KTRNVPANFNEAK) are cytoplasmic. A helical membrane pass occupies residues 786-807 (YIAFTMYTTCIIWLAFVPIYFG). Residues 808-815 (SNYKIITT) lie on the Extracellular side of the membrane. The chain crosses the membrane as a helical span at residues 816–840 (CFAVSLSVTVALGCMFTPKMYIIIA). The Cytoplasmic segment spans residues 841–1199 (KPERNVRSAF…RDYKQSSSTL (359 aa)). Position 853 is a phosphoserine (serine 853). Threonine 871 carries the post-translational modification Phosphothreonine. Disordered regions lie at residues 882–906 (GAGN…APKG), 959–1035 (EEDN…QPKS), and 1055–1082 (HAVL…QHLQ). Over residues 885–895 (NANSNGKSVSW) the composition is skewed to polar residues. Residues serine 894 and serine 969 each carry the phosphoserine modification. A compositionally biased stretch (pro residues) spans 1012 to 1032 (GLPPPLPQQQQQPPPQPPPQQ). Position 1097 is a phosphoserine (serine 1097). A disordered region spans residues 1118–1177 (VYEREGNTEEDDLEEEEDLPAASKLTPEDSPALTPPSPFRDSVASGSSVPSSPVSESVLC). Residues 1125-1136 (TEEDDLEEEEDL) show a composition bias toward acidic residues. A Phosphoserine modification is found at serine 1147. Threonine 1151 is modified (phosphothreonine). Serine 1154 carries the phosphoserine modification. The segment covering 1159–1175 (SVASGSSVPSSPVSESV) has biased composition (low complexity).

This sequence belongs to the G-protein coupled receptor 3 family. Homodimer; disulfide-linked. The PPXXF motif binds HOMER1, HOMER2 and HOMER3. Interacts with TAMALIN. Interacts with RYR1, RYR2, ITPR1, SHANK1 and SHANK3. Interacts with SHIA1. Expressed in the striatum (at protein level). Expressed in type II unipolar brush cells of the cerebellum (at protein level).

The protein resides in the cell membrane. The protein localises to the postsynaptic cell membrane. Its subcellular location is the cell projection. It is found in the dendrite. Its function is as follows. G-protein coupled receptor for glutamate. Ligand binding causes a conformation change that triggers signaling via guanine nucleotide-binding proteins (G proteins) and modulates the activity of down-stream effectors. Signaling activates a phosphatidylinositol-calcium second messenger system. May participate in the central action of glutamate in the CNS, such as long-term potentiation in the hippocampus and long-term depression in the cerebellum (By. similarity). May function in the light response in the retina. Induces GRID1 and GRID2 cation-channel activation via GNAQ-PLC-PKC pathway in dopaminergic neurons and cerebellar Purkinje cell, respectively. This is Metabotropic glutamate receptor 1 (Grm1) from Mus musculus (Mouse).